The primary structure comprises 100 residues: NADH-quinone oxidoreductase subunit K (100 aa).

3 helical membrane-spanning segments follow: residues 4 to 24 (LSNY…GVLT), 29 to 49 (IVVF…FVAF), and 60 to 80 (IFVF…LALF).

The protein belongs to the complex I subunit 4L family. In terms of assembly, NDH-1 is composed of 14 different subunits. Subunits NuoA, H, J, K, L, M, N constitute the membrane sector of the complex.

It localises to the cell inner membrane. The enzyme catalyses a quinone + NADH + 5 H(+)(in) = a quinol + NAD(+) + 4 H(+)(out). NDH-1 shuttles electrons from NADH, via FMN and iron-sulfur (Fe-S) centers, to quinones in the respiratory chain. The immediate electron acceptor for the enzyme in this species is believed to be ubiquinone. Couples the redox reaction to proton translocation (for every two electrons transferred, four hydrogen ions are translocated across the cytoplasmic membrane), and thus conserves the redox energy in a proton gradient. The chain is NADH-quinone oxidoreductase subunit K from Trichlorobacter lovleyi (strain ATCC BAA-1151 / DSM 17278 / SZ) (Geobacter lovleyi).